We begin with the raw amino-acid sequence, 544 residues long: (E,E)-germacrene B synthase (544 aa).

Positions 296, 300, and 449 each coordinate Mg(2+). The DDXXD motif motif lies at 296–300 (DDTFD).

Belongs to the terpene synthase family. It depends on Mg(2+) as a cofactor. Requires Mn(2+) as cofactor.

The protein localises to the cytoplasm. The catalysed reaction is (2E,6E)-farnesyl diphosphate = (1E,4E)-germacrene B + diphosphate. It participates in secondary metabolite biosynthesis; terpenoid biosynthesis. Its function is as follows. Involved in the biosynthesis of germacrene B. This Solanum habrochaites (Wild tomato) protein is (E,E)-germacrene B synthase (SSTLH1).